Reading from the N-terminus, the 666-residue chain is Endogenous retrovirus group K member 7 Gag polyprotein (666 aa).

G2 carries the N-myristoyl glycine lipid modification. Disordered stretches follow at residues 165–205 (GKGP…NKTQ) and 217–264 (ELQY…GSEL). The segment covering 232–247 (GMPPAPQGRAPYPQPP) has biased composition (pro residues). 2 consecutive CCHC-type zinc fingers follow at residues 544-561 (GKCY…NCPV) and 580-597 (DLCP…QCRS). Positions 598-641 (KFDKNGQPLSGNEQRGQPQAPQQTGAFPIQPFVPQGFQEQQPPL) are disordered. Polar residues predominate over residues 604-622 (QPLSGNEQRGQPQAPQQTG).

Belongs to the beta type-B retroviral Gag protein family. HERV class-II K(HML-2) gag subfamily. Specific enzymatic cleavages may yield mature proteins. In terms of processing, myristoylation is essential for retroviral assembly. Alteration of the glycine residue leads to a block in the budding of particles and an accumulation of Gag inside the cell.

It localises to the cell membrane. Its function is as follows. The products of the Gag polyproteins of infectious retroviruses perform highly complex orchestrated tasks during the assembly, budding, maturation, and infection stages of the viral replication cycle. During viral assembly, the proteins form membrane associations and self-associations that ultimately result in budding of an immature virion from the infected cell. Gag precursors also function during viral assembly to selectively bind and package two plus strands of genomic RNA. Endogenous Gag proteins may have kept, lost or modified their original function during evolution. The sequence is that of Endogenous retrovirus group K member 7 Gag polyprotein (ERVK-7) from Homo sapiens (Human).